The sequence spans 147 residues: Leghemoglobin 6 (147 aa).

In terms of domain architecture, Globin spans 2 to 147 (SFTDKQEALV…LATEIKKAMS (146 aa)). 2 positions are modified to nitrated tyrosine: Tyr25 and Tyr30. Ser45 contacts heme b. Ser45 is subject to Phosphoserine. His62 is an O2 binding site. Residues Lys65, His94, and Lys97 each contribute to the heme b site. The residue at position 135 (Tyr135) is a Nitrated tyrosine.

Belongs to the plant globin family. Monomer. Nitrated in effective nodules and particularly in hypoxic conditions; this mechanism may play a protective role in the symbiosis by buffering toxic peroxynitrite NO(2)(-). Nitration level decrease during nodule senescence. In terms of processing, phosphorylation at Ser-45 disrupts the molecular environment of its porphyrin ring oxygen binding pocket, thus leading to a reduced oxygen consumption and to the delivery of oxygen O(2) to symbiosomes. Root nodules.

It localises to the cytoplasm. Its subcellular location is the cytosol. It is found in the nucleus. Functionally, leghemoglobin that reversibly binds oxygen O(2) through a pentacoordinated heme iron. In root nodules, facilitates the diffusion of oxygen to the bacteroids while preventing the bacterial nitrogenase from being inactivated by buffering dioxygen, nitric oxide and carbon monoxide, and promoting the formation of reactive oxygen species (ROS, e.g. H(2)O(2)). This role is essential for symbiotic nitrogen fixation (SNF). The chain is Leghemoglobin 6 from Medicago truncatula (Barrel medic).